We begin with the raw amino-acid sequence, 409 residues long: Sperm equatorial segment protein 1 (409 aa).

Residues 1–18 form the signal peptide; it reads MKPVVLVALLWLWPSSFL. An N-linked (GlcNAc...) asparagine glycan is attached at asparagine 132. The tract at residues 141–223 is disordered; that stretch reads EPYIEKEPEP…TTNTQGTPNT (83 aa). The segment covering 167 to 177 has biased composition (acidic residues); it reads PEPEPESESAP. Residues 198–208 are compositionally biased toward polar residues; that stretch reads NKVRTGTSRMS. Low complexity predominate over residues 209–223; the sequence is TVITQTTNTQGTPNT.

Belongs to the SPESP1 family. In terms of processing, glycosylated. In testis there are two predominant forms of 77- and 67-kDa and a form of 47-kDa, whereas in epididymal sperm from caput, corpus, and cauda there are two forms of 47- and 43-kDa. Testis forms contain complex carbohydrate residues. Epididymal sperm forms are N-glycosylated. Then undergoes significant glycosylation in the testis and that the majority of these glycoconjugates are removed by the time sperm reach the caput epididymis.

The protein localises to the cytoplasmic vesicle. It is found in the secretory vesicle. Its subcellular location is the acrosome. Functionally, involved in fertilization ability of sperm. This Rattus norvegicus (Rat) protein is Sperm equatorial segment protein 1.